The following is a 448-amino-acid chain: Allantoinase (448 aa).

Residues H60, H62, K147, H183, H239, and D312 each contribute to the Zn(2+) site. Position 147 is an N6-carboxylysine (K147).

It belongs to the metallo-dependent hydrolases superfamily. Allantoinase family. Homotetramer. Zn(2+) is required as a cofactor. In terms of processing, carboxylation allows a single lysine to coordinate two zinc ions.

It catalyses the reaction (S)-allantoin + H2O = allantoate + H(+). Its pathway is nitrogen metabolism; (S)-allantoin degradation; allantoate from (S)-allantoin: step 1/1. Its function is as follows. Catalyzes the conversion of allantoin (5-ureidohydantoin) to allantoic acid by hydrolytic cleavage of the five-member hydantoin ring. In Deinococcus radiodurans (strain ATCC 13939 / DSM 20539 / JCM 16871 / CCUG 27074 / LMG 4051 / NBRC 15346 / NCIMB 9279 / VKM B-1422 / R1), this protein is Allantoinase.